The sequence spans 853 residues: MDQLIPVINKLQDVFNTLGSDPLDLPQIVVVGSQSSGKSSVLENIVGRDFLPRGSGIVTRRPLILQLTHLPIADDGSQTQEWGEFLHKPNDMFYDFSEIREEIIRDTDRMTGKNKGISAQPINLKIYSPHVVNLTLVDLPGITKVPVGDQPTDIEQQIRRMVMAYIKKQNAIIVAVTPANTDLANSDALQLAKEVDPEGKRTIGVITKLDLMDKGTDAMEVLTGRVIPLTLGFIGVINRSQEDIIAKKSIRESLKSEILYFKNHPIYKSIANRSGTAYLSKTLNKLLMFHIRDTLPDLKVKVSKMLSDVQGELSTYGDPLYDTKNSQGALLLQIITIFSSNFKDAIDGKLTDLSNNELYGGARISYIFNEIYSHCVNNIDPLEGISLNDIRTTMRNATGPRAALFIPEISFELLVKKQVVRLEEPSAQCVEYVYDELQRIVSQLEAKELSRFINLKARVIEVVNNLLQKHKVPTKTMIEHLIKIETAFINTSHPDFVGGEGIFESLYKKQQLQQQNHLQQLQDQYQQQQQQQQQQQQQNGINNNQKGDNGNMNVNQQNMNQQNMNQQNQSTNPFLQQQQQGQNKYPGGPPAQQQPNQQPNQLNKGPQNMPPNQSKPSSIPQNGPNNNNNNNNNNNRQDHQQGSFFSSFFRASPDPSLGQYGGANNSNNSNNPTSPINSSSNSGNNYNTFGGQQSSSSSSQQLQQSSQSQYKTSYNNNNNSSSNNSSYNRYQDDFYGRGDKLNQVPSIIKAPDDLTSKEKFETELIRELLISYFNIVKKNVKDSVPKSIMHFLVNQSKEHIQNELVAALYKEELFDELLEESPQISSKRKSCKAMIEILRKANEIINEIRDFRN.

The Dynamin-type G domain occupies 22-296 (PLDLPQIVVV…LMFHIRDTLP (275 aa)). The interval 32-39 (GSQSSGKS) is G1 motif. GTP is bound at residue 32 to 40 (GSQSSGKSS). Positions 58–60 (VTR) are G2 motif. The tract at residues 138 to 141 (DLPG) is G3 motif. Positions 207 to 210 (TKLD) are G4 motif. Residues 207 to 213 (TKLDLMD) and 238 to 241 (NRSQ) each bind GTP. Positions 237-240 (INRS) are G5 motif. Low complexity-rich tracts occupy residues 523–569 (DQYQ…QQNQ) and 590–607 (PAQQ…KGPQ). Residues 523–738 (DQYQQQQQQQ…RYQDDFYGRG (216 aa)) are disordered. Residues 610-624 (PPNQSKPSSIPQNGP) are compositionally biased toward polar residues. Low complexity-rich tracts occupy residues 625 to 635 (NNNNNNNNNNN) and 664 to 728 (NNSN…SSYN). In terms of domain architecture, GED spans 762-853 (TELIRELLIS…IINEIRDFRN (92 aa)).

It belongs to the TRAFAC class dynamin-like GTPase superfamily. Dynamin/Fzo/YdjA family.

The protein localises to the cytoplasm. Its function is as follows. Function in membrane trafficking processes along the endo-lysosomal pathway. The chain is Dynamin-A (dymA) from Dictyostelium discoideum (Social amoeba).